Consider the following 154-residue polypeptide: Holo-[acyl-carrier-protein] synthase (154 aa).

Positions 8 and 57 each coordinate Mg(2+).

It belongs to the P-Pant transferase superfamily. AcpS family. Requires Mg(2+) as cofactor.

The protein localises to the cytoplasm. It catalyses the reaction apo-[ACP] + CoA = holo-[ACP] + adenosine 3',5'-bisphosphate + H(+). Transfers the 4'-phosphopantetheine moiety from coenzyme A to a Ser of acyl-carrier-protein. The sequence is that of Holo-[acyl-carrier-protein] synthase from Nitrosococcus oceani (strain ATCC 19707 / BCRC 17464 / JCM 30415 / NCIMB 11848 / C-107).